A 381-amino-acid chain; its full sequence is Cobalt-precorrin-5B C(1)-methyltransferase (381 aa).

It belongs to the CbiD family.

The enzyme catalyses Co-precorrin-5B + S-adenosyl-L-methionine = Co-precorrin-6A + S-adenosyl-L-homocysteine. Its pathway is cofactor biosynthesis; adenosylcobalamin biosynthesis; cob(II)yrinate a,c-diamide from sirohydrochlorin (anaerobic route): step 6/10. Catalyzes the methylation of C-1 in cobalt-precorrin-5B to form cobalt-precorrin-6A. This Prochlorococcus marinus (strain NATL2A) protein is Cobalt-precorrin-5B C(1)-methyltransferase.